A 216-amino-acid chain; its full sequence is MTNIISVDTLLSASKLTCIREERILFDELSFEINAGDIVQIEGPNGAGKTSLLRILAGLSRPYAGQTFYVNEDINRCRDEYNEDLLYLGHLAGVKSELTAEENLNFNLRISGYDDFDTSAILAKVNLSGFEEALAGHLSAGQHRRTALARLWHNDCKIWILDEPFTAIDKRGVEELEQLFIKHADNGGCVILTTHQDMGIIKDDRLRKIRLDYRFV.

Residues 5–216 (ISVDTLLSAS…RKIRLDYRFV (212 aa)) enclose the ABC transporter domain. 43-50 (GPNGAGKT) contributes to the ATP binding site.

The protein belongs to the ABC transporter superfamily. CcmA exporter (TC 3.A.1.107) family. In terms of assembly, the complex is composed of two ATP-binding proteins (CcmA) and two transmembrane proteins (CcmB).

The protein resides in the cell inner membrane. The catalysed reaction is heme b(in) + ATP + H2O = heme b(out) + ADP + phosphate + H(+). In terms of biological role, part of the ABC transporter complex CcmAB involved in the biogenesis of c-type cytochromes; once thought to export heme, this seems not to be the case, but its exact role is uncertain. Responsible for energy coupling to the transport system. The chain is Cytochrome c biogenesis ATP-binding export protein CcmA from Shewanella oneidensis (strain ATCC 700550 / JCM 31522 / CIP 106686 / LMG 19005 / NCIMB 14063 / MR-1).